Consider the following 513-residue polypeptide: ATP synthase subunit alpha (513 aa).

Position 169–176 (169–176) interacts with ATP; the sequence is GDRQTGKT.

This sequence belongs to the ATPase alpha/beta chains family. F-type ATPases have 2 components, CF(1) - the catalytic core - and CF(0) - the membrane proton channel. CF(1) has five subunits: alpha(3), beta(3), gamma(1), delta(1), epsilon(1). CF(0) has three main subunits: a(1), b(2) and c(9-12). The alpha and beta chains form an alternating ring which encloses part of the gamma chain. CF(1) is attached to CF(0) by a central stalk formed by the gamma and epsilon chains, while a peripheral stalk is formed by the delta and b chains.

Its subcellular location is the cell inner membrane. The enzyme catalyses ATP + H2O + 4 H(+)(in) = ADP + phosphate + 5 H(+)(out). Produces ATP from ADP in the presence of a proton gradient across the membrane. The alpha chain is a regulatory subunit. The polypeptide is ATP synthase subunit alpha (Bordetella bronchiseptica (strain ATCC BAA-588 / NCTC 13252 / RB50) (Alcaligenes bronchisepticus)).